Here is a 57-residue protein sequence, read N- to C-terminus: Large ribosomal subunit protein bL32 (57 aa).

This sequence belongs to the bacterial ribosomal protein bL32 family.

The protein is Large ribosomal subunit protein bL32 of Mycolicibacterium gilvum (strain PYR-GCK) (Mycobacterium gilvum (strain PYR-GCK)).